The sequence spans 536 residues: Proto-oncogene tyrosine-protein kinase Src (536 aa).

A disordered region spans residues 1-53 (MGSNKSKPKDASQRRRSLEPAENVHGAGGGAFPASQTPSKPASADGHRGPSAA). Gly-2 carries N-myristoyl glycine lipidation. Residues 7–19 (KPKDASQRRRSLE) show a composition bias toward basic and acidic residues. Ser-17 carries the post-translational modification Phosphoserine. Ser-75 is subject to Phosphoserine; by CDK5. Positions 84–145 (GGVTTFVALY…PSNYVAPSDS (62 aa)) constitute an SH3 domain. An SH2 domain is found at 151 to 248 (WYFGKITRRE…GLCHRLTTVC (98 aa)). The residue at position 187 (Tyr-187) is a Phosphotyrosine. Residues 270–523 (LRLEVKLGQG…YLQAFLEDYF (254 aa)) form the Protein kinase domain. ATP-binding positions include 276–284 (LGQGCFGEV) and Lys-298. Asp-389 functions as the Proton acceptor in the catalytic mechanism. The residue at position 419 (Tyr-419) is a Phosphotyrosine; by autocatalysis. Tyr-419 carries the post-translational modification Phosphotyrosine; by FAK2. Tyr-530 is modified (phosphotyrosine; by CSK).

The protein belongs to the protein kinase superfamily. Tyr protein kinase family. SRC subfamily. Part of a complex comprised of PTPRA, BCAR1, BCAR3 (via SH2 domain) and SRC; the formation of the complex is dependent on integrin mediated-tyrosine phosphorylation of PTPRA. Interacts with DDEF1/ASAP1; via the SH3 domain. Interacts with CCPG1. Identified in a complex containing FGFR4, NCAM1, CDH2, PLCG1, FRS2, SRC, SHC1, GAP43 and CTTN. Interacts with ERBB2, STAT1 and PNN. Interacts with DDR1, DDR2 and DAB2. Interacts with CDCP1, TGFB1I1 and TOM1L2. Interacts with the cytoplasmic domain of MUC1, phosphorylates it and increases binding of MUC1 with beta-catenin. Interacts with RALGPS1; via the SH3 domain. Interacts with CAV2 (tyrosine phosphorylated form). Interacts (via the SH3 domain and the protein kinase domain) with ARRB1; the interaction is independent of the phosphorylation state of SRC C-terminus. Interacts with ARRB1 and ARRB2. Interacts with SRCIN1. Interacts with NDFIP2 and more weakly with NDFIP1. Interacts with PIK3CA and/or PIK3C2B, PTK2/FAK1 and ESR1 (dimethylated on arginine). Interacts with FASLG. Interacts (via SH2 domain) with the 'Tyr-402' phosphorylated form of PTK2B/PYK2. Interacts (via SH2 domain) with FLT3 (tyrosine phosphorylated). Interacts with PDGFRA (tyrosine phosphorylated). Interacts with CSF1R. Interacts (via SH2 and SH3 domain) with TNK2. Interacts (via protein kinase domain) with the tyrosine phosphorylated form of RUNX3 (via runt domain). Interacts with TRAF3 (via RING-type zinc finger domain). Interacts with RIGI, MAVS and TBK1. Interacts (via SH2 domain) with RACK1; the interaction is enhanced by tyrosine phosphorylation of RACK1 and inhibits SRC activity. Interacts with EPHB1; activates the MAPK/ERK cascade to regulate cell migration. Interacts with FCAMR. Interacts (via SH2 domain) with the 'Tyr-9' phosphorylated form of PDPK1. Interacts with AMOTL2; this interaction regulates the translocation of phosphorylated SRC to peripheral cell-matrix adhesion sites. Interacts with TRAP1. Interacts with CBLC; the interaction is enhanced when SRC is phosphorylated at Tyr-419. Interacts with ARHGEF5. Interacts (via cytoplasmic domain) with CEACAM1 (via SH2 domain); this interaction is regulated by trans-homophilic cell adhesion. Interacts with MPP2. Interacts with PRR7. Interacts (via kinase domain and to a lesser extent the SH2 domain) directly with PDLIM4; this interaction results in PTPN13-mediated dephosphorylation of this protein leading to its inactivation. Interacts with P85 (PIK3R1 or PIK3R2). Interacts with HNRNPA2B1. Interacts with IL6ST/gp130. Interacts (via SH3 domain) with PELP1 in the presence of 17-beta-estradiol. Interacts with AMBRA1. As to quaternary structure, (Microbial infection) Interacts with HEV ORF3 protein; via the SH3 domain. In terms of assembly, (Microbial infection) Interacts (via SH2 domain) with HCV non-structural protein 5A (via N-terminus). Post-translationally, myristoylated at Gly-2, and this is essential for targeting to membranes. Dephosphorylated at Tyr-530 by PTPRJ. Phosphorylated on Tyr-530 by c-Src kinase (CSK). The phosphorylated form is termed pp60c-src. Dephosphorylated by PTPRJ at Tyr-419. Normally maintained in an inactive conformation with the SH2 domain engaged with Tyr-530, the SH3 domain engaged with the SH2-kinase linker, and Tyr-419 dephosphorylated. Dephosphorylation of Tyr-530 as a result of protein tyrosine phosphatase (PTP) action disrupts the intramolecular interaction between the SH2 domain and Tyr-530, Tyr-419 can then become autophosphorylated, resulting in SRC activation. Phosphorylation of Tyr-530 by CSK allows this interaction to reform, resulting in SRC inactivation. CDK5-mediated phosphorylation at Ser-75 targets SRC to ubiquitin-dependent degradation and thus leads to cytoskeletal reorganization. Phosphorylated by PTK2/FAK1; this enhances kinase activity. Phosphorylated by PTK2B/PYK2; this enhances kinase activity. Upon activation of IL6ST by IL6, Tyr-419 is phosphorylated and Tyr-530 dephosphorylated. In terms of processing, displays reduced levels of autophosphorylation at Tyr-419 compared to isoforms 2 and 3. Post-translationally, displays enhanced levels of autophosphorylation at Tyr-419 compared to isoform 1. Displays enhanced levels of autophosphorylation at Tyr-419 compared to isoform 1. Shows reduced phosphorylation at Tyr-527 compared to isoforms 1 and 2. In terms of processing, S-nitrosylation is important for activation of its kinase activity. Post-translationally, ubiquitinated in response to CDK5-mediated phosphorylation. Ubiquitination mediated by CBLC requires SRC autophosphorylation at Tyr-419 and may lead to lysosomal degradation. As to expression, expressed ubiquitously. Expressed in the skin (at protein level). Platelets, neurons and osteoclasts express 5-fold to 200-fold higher levels than most other tissues. Expressed in spleen and liver. In terms of tissue distribution, expressed in brain.

The protein resides in the cell membrane. It is found in the mitochondrion inner membrane. Its subcellular location is the nucleus. The protein localises to the cytoplasm. It localises to the cytoskeleton. The protein resides in the perinuclear region. It is found in the cell junction. Its subcellular location is the focal adhesion. It carries out the reaction L-tyrosyl-[protein] + ATP = O-phospho-L-tyrosyl-[protein] + ADP + H(+). With respect to regulation, phosphorylation by CSK at Tyr-530 inhibits kinase activity. Inhibitory phosphorylation at Tyr-530 is enhanced by heme. Further phosphorylation by CDK1 partially reactivates CSK-inactivated SRC and facilitates complete reactivation by protein tyrosine phosphatase PTPRC. Integrin engagement stimulates kinase activity. Phosphorylation by PTK2/FAK1 enhances kinase activity. Butein and pseudosubstrate-based peptide inhibitors like CIYKYYF act as inhibitors. Phosphorylation at Tyr-419 increases kinase activity. Functionally, non-receptor protein tyrosine kinase which is activated following engagement of many different classes of cellular receptors including immune response receptors, integrins and other adhesion receptors, receptor protein tyrosine kinases, G protein-coupled receptors as well as cytokine receptors. Participates in signaling pathways that control a diverse spectrum of biological activities including gene transcription, immune response, cell adhesion, cell cycle progression, apoptosis, migration, and transformation. Due to functional redundancy between members of the SRC kinase family, identification of the specific role of each SRC kinase is very difficult. SRC appears to be one of the primary kinases activated following engagement of receptors and plays a role in the activation of other protein tyrosine kinase (PTK) families. Receptor clustering or dimerization leads to recruitment of SRC to the receptor complexes where it phosphorylates the tyrosine residues within the receptor cytoplasmic domains. Plays an important role in the regulation of cytoskeletal organization through phosphorylation of specific substrates such as AFAP1. Phosphorylation of AFAP1 allows the SRC SH2 domain to bind AFAP1 and to localize to actin filaments. Cytoskeletal reorganization is also controlled through the phosphorylation of cortactin (CTTN). When cells adhere via focal adhesions to the extracellular matrix, signals are transmitted by integrins into the cell resulting in tyrosine phosphorylation of a number of focal adhesion proteins, including PTK2/FAK1 and paxillin (PXN). In addition to phosphorylating focal adhesion proteins, SRC is also active at the sites of cell-cell contact adherens junctions and phosphorylates substrates such as beta-catenin (CTNNB1), delta-catenin (CTNND1), and plakoglobin (JUP). Another type of cell-cell junction, the gap junction, is also a target for SRC, which phosphorylates connexin-43 (GJA1). SRC is implicated in regulation of pre-mRNA-processing and phosphorylates RNA-binding proteins such as KHDRBS1. Phosphorylates PKP3 at 'Tyr-195' in response to reactive oxygen species, which may cause the release of PKP3 from desmosome cell junctions into the cytoplasm. Also plays a role in PDGF-mediated tyrosine phosphorylation of both STAT1 and STAT3, leading to increased DNA binding activity of these transcription factors. Involved in the RAS pathway through phosphorylation of RASA1 and RASGRF1. Plays a role in EGF-mediated calcium-activated chloride channel activation. Required for epidermal growth factor receptor (EGFR) internalization through phosphorylation of clathrin heavy chain (CLTC and CLTCL1) at 'Tyr-1477'. Involved in beta-arrestin (ARRB1 and ARRB2) desensitization through phosphorylation and activation of GRK2, leading to beta-arrestin phosphorylation and internalization. Has a critical role in the stimulation of the CDK20/MAPK3 mitogen-activated protein kinase cascade by epidermal growth factor. Might be involved not only in mediating the transduction of mitogenic signals at the level of the plasma membrane but also in controlling progression through the cell cycle via interaction with regulatory proteins in the nucleus. Plays an important role in osteoclastic bone resorption in conjunction with PTK2B/PYK2. Both the formation of a SRC-PTK2B/PYK2 complex and SRC kinase activity are necessary for this function. Recruited to activated integrins by PTK2B/PYK2, thereby phosphorylating CBL, which in turn induces the activation and recruitment of phosphatidylinositol 3-kinase to the cell membrane in a signaling pathway that is critical for osteoclast function. Promotes energy production in osteoclasts by activating mitochondrial cytochrome C oxidase. Phosphorylates DDR2 on tyrosine residues, thereby promoting its subsequent autophosphorylation. Phosphorylates RUNX3 and COX2 on tyrosine residues, TNK2 on 'Tyr-284' and CBL on 'Tyr-731'. Enhances RIGI-elicited antiviral signaling. Phosphorylates PDPK1 at 'Tyr-9', 'Tyr-373' and 'Tyr-376'. Phosphorylates BCAR1 at 'Tyr-128'. Phosphorylates CBLC at multiple tyrosine residues, phosphorylation at 'Tyr-341' activates CBLC E3 activity. Phosphorylates synaptic vesicle protein synaptophysin (SYP). Involved in anchorage-independent cell growth. Required for podosome formation. Mediates IL6 signaling by activating YAP1-NOTCH pathway to induce inflammation-induced epithelial regeneration. Phosphorylates OTUB1, promoting deubiquitination of RPTOR. Phosphorylates caspase CASP8 at 'Tyr-380' which negatively regulates CASP8 processing and activation, down-regulating CASP8 proapoptotic function. In terms of biological role, non-receptor protein tyrosine kinase which phosphorylates synaptophysin with high affinity. Non-receptor protein tyrosine kinase which shows higher basal kinase activity than isoform 1, possibly due to weakened intramolecular interactions which enhance autophosphorylation of Tyr-419 and subsequent activation. The SH3 domain shows reduced affinity with the linker sequence between the SH2 and kinase domains which may account for the increased basal activity. Displays altered substrate specificity compared to isoform 1, showing weak affinity for synaptophysin and for peptide substrates containing class I or class II SH3 domain-binding motifs. Plays a role in L1CAM-mediated neurite elongation, possibly by acting downstream of L1CAM to drive cytoskeletal rearrangements involved in neurite outgrowth. Its function is as follows. Non-receptor protein tyrosine kinase which shows higher basal kinase activity than isoform 1, possibly due to weakened intramolecular interactions which enhance autophosphorylation of Tyr-419 and subsequent activation. The SH3 domain shows reduced affinity with the linker sequence between the SH2 and kinase domains which may account for the increased basal activity. Displays altered substrate specificity compared to isoform 1, showing weak affinity for synaptophysin and for peptide substrates containing class I or class II SH3 domain-binding motifs. Plays a role in neurite elongation. This is Proto-oncogene tyrosine-protein kinase Src from Homo sapiens (Human).